Consider the following 289-residue polypeptide: NAC domain-containing protein 2 (289 aa).

One can recognise an NAC domain in the interval 7 to 158 (LPPGFRFHPT…DWVLCRIYNK (152 aa)).

In terms of assembly, interacts with KIN10 and KIN11.

The protein resides in the nucleus. The sequence is that of NAC domain-containing protein 2 (NAC002) from Arabidopsis thaliana (Mouse-ear cress).